The following is a 264-amino-acid chain: Small ribosomal subunit protein uS2 (264 aa).

The tract at residues 228 to 264 (QLDAEDDYEDYDGSEYDDDYEETEYTDAVIPDEETEE) is disordered. Positions 230–264 (DAEDDYEDYDGSEYDDDYEETEYTDAVIPDEETEE) are enriched in acidic residues.

This sequence belongs to the universal ribosomal protein uS2 family.

The sequence is that of Small ribosomal subunit protein uS2 from Nostoc punctiforme (strain ATCC 29133 / PCC 73102).